A 289-amino-acid polypeptide reads, in one-letter code: Membrane protein insertase YidC (289 aa).

A signal peptide spans 1–19 (MKKKALLPLLLGIMVFLAG). The N-palmitoyl cysteine moiety is linked to residue Cys20. Residue Cys20 is the site of S-diacylglycerol cysteine attachment. The next 5 membrane-spanning stretches (helical) occupy residues 55 to 75 (YGLAIIVLVLAIRIIVLPFML), 133 to 153 (MLGCLPMLIQMPIIMGLFFVL), 177 to 197 (IWITVIAGVLYFLQAYVSTFS), 210 to 230 (MIISPIMIIWVSLSSAAALGL), and 231 to 251 (YWSVSAAFLIVQTYIANAYYS). Positions 268–289 (EHGGSGNSKGAKVVSKKNKKKK) are disordered.

Belongs to the OXA1/ALB3/YidC family. Type 2 subfamily.

It localises to the cell membrane. In terms of biological role, required for the insertion and/or proper folding and/or complex formation of integral membrane proteins into the membrane. Involved in integration of membrane proteins that insert both dependently and independently of the Sec translocase complex, as well as at least some lipoproteins. The polypeptide is Membrane protein insertase YidC (Staphylococcus carnosus (strain TM300)).